Reading from the N-terminus, the 639-residue chain is ADP-ribosylation factor-binding protein GGA1 (639 aa).

At Met-1 the chain carries N-acetylmethionine. The 131-residue stretch at Ala-17–Ser-147 folds into the VHS domain. The tract at residues Lys-114–Asp-274 is interaction with ARF3. The GAT domain occupies Asp-171–Arg-299. Position 185 is a phosphoserine (Ser-185). Residues Gly-300–Pro-509 are unstructured hinge. 2 disordered regions span residues Leu-320 to Asp-421 and Ser-434 to Pro-492. Phosphoserine; by CK2 is present on Ser-355. The Autoinhibitory motif lies at Asp-358–Met-362. The segment covering Gly-381–Ala-390 has biased composition (polar residues). At Ser-418 the chain carries Phosphoserine. Residues Ser-462–Ser-480 show a composition bias toward low complexity. Pro residues predominate over residues Pro-481 to Pro-490. Positions Ser-510–Pro-631 constitute a GAE domain.

The protein belongs to the GGA protein family. As to quaternary structure, monomer. Interacts with GGA2 and GGA3. Binds to clathrin and activated ARFs, including ARF1, ARF5 and ARF6. Interacts with RABEP1. Interacts with RABGEF1. Interacts with the type-I membrane proteins LRP3, M6PR/CD-MPR and IGF2R/CI-MPR. Interacts (via N-terminal VHS domain) with SORL1/sorLA and SORT1 (via C-terminal cytosolic domain). Interacts with EPN4. Interacts with CCDC91. Interacts with HEATR5B/p200a. Interacts with SYNRG/gamma-synergin. Interacts (via GAE doamin) with NECAP1 and NECAP2. Interacts (via GAE domain) with AFTPH/aftiphilin. Interacts with TSG101 and UBC. Interacts with RNF11. Interacts (via VHS domain) with BACE1 (via DXXLL motif); the interaction highly increases when BACE1 is phosphorylated at 'Ser-498'. Interacts with CNST. Interacts with ADRA2B. Interacts with ARL3; the interaction recruits, in collaboration with RABEP1, PKD1:PKD2 complex to trans-Golgi network and is required for ciliary targeting. Post-translationally, phosphorylated by CK2 and dephosphorylated by PP2A. Phosphorylation of GGA1 allows the internal DXXLL motif to bind the VHS domain and to inhibit the recognition of cargo signals. In terms of processing, ubiquitinated. As to expression, ubiquitously expressed.

Its subcellular location is the golgi apparatus. The protein resides in the trans-Golgi network membrane. It is found in the endosome membrane. The protein localises to the early endosome membrane. Plays a role in protein sorting and trafficking between the trans-Golgi network (TGN) and endosomes. Mediates the ARF-dependent recruitment of clathrin to the TGN and binds ubiquitinated proteins and membrane cargo molecules with a cytosolic acidic cluster-dileucine (DXXLL) motif. Mediates export of the GPCR receptor ADRA2B to the cell surface. Required for targeting PKD1:PKD2 complex from the trans-Golgi network to the cilium membrane. Regulates retrograde transport of proteins such as phosphorylated form of BACE1 from endosomes to the trans-Golgi network. The sequence is that of ADP-ribosylation factor-binding protein GGA1 (GGA1) from Homo sapiens (Human).